The chain runs to 103 residues: Large ribosomal subunit protein uL23 (103 aa).

It belongs to the universal ribosomal protein uL23 family. In terms of assembly, part of the 50S ribosomal subunit. Contacts protein L29, and trigger factor when it is bound to the ribosome.

Functionally, one of the early assembly proteins it binds 23S rRNA. One of the proteins that surrounds the polypeptide exit tunnel on the outside of the ribosome. Forms the main docking site for trigger factor binding to the ribosome. The chain is Large ribosomal subunit protein uL23 from Chlorobium phaeobacteroides (strain DSM 266 / SMG 266 / 2430).